The chain runs to 165 residues: Iron sulfur cluster assembly protein 1, mitochondrial (165 aa).

The N-terminal 27 residues, 1–27 (MLPVITRFARPALMAIRPVNAMGVLRA), are a transit peptide targeting the mitochondrion. Residues 132–136 (LPPVK) form an SSQ1 binding region region.

The protein belongs to the NifU family. Homodimer, but can exist as monomers or trimers. Oligomerization may be regulated by Zn(2+) availability. Component of the core Fe-S cluster (ISC) assembly machinery. Interacts with YFH1/frataxin with a 1 to 1 stoichiometry; the interaction is direct. Interacts with the mitochondrial co-chaperones JAC1 and SSQ1. Interacts with NFS1. Interacts with YAH1/ferredoxin; interacts with the reduced form. The cofactor is [2Fe-2S] cluster. Zn(2+) is required as a cofactor.

It is found in the mitochondrion matrix. Its pathway is cofactor biosynthesis; iron-sulfur cluster biosynthesis. In terms of biological role, scaffold protein for the de novo synthesis of iron-sulfur (Fe-S) clusters within mitochondria, which is required for maturation of both mitochondrial and cytoplasmic [2Fe-2S] and [4Fe-4S] proteins. First, a [2Fe-2S] cluster is transiently assembled on the scaffold proteins ISU1 and ISU2. In a second step, the cluster is released from ISU1/ISU2, transferred to glutaredoxin GRX5, followed by the formation of mitochondrial [2Fe-2S] proteins, the synthesis of [4Fe-4S] clusters and their target-specific insertion into the recipient apoproteins. Cluster assembly on ISU1/ISU2 depends on the function of the cysteine desulfurase complex NFS1-ISD11, which serves as the sulfur donor for cluster synthesis, the iron-binding protein frataxin (YFH1) as the putative iron donor, and the electron transfer chain comprised of ferredoxin reductase ARH1 and ferredoxin YAH1, which receive their electrons from NADH. Fe-S cluster release from ISU1/ISU2 is achieved by interaction with the Hsp70 chaperone SSQ1, assisted by the DnaJ-like co-chaperone JAC1 and the nucleotide exchange factor MGE1. ISU1 is the major isoform in yeast, while ISU2 is not detectable in cells grown to stationary phase. Also involved in production of a sulfur precursor required for thiolation of cytoplasmic tRNAs. The protein is Iron sulfur cluster assembly protein 1, mitochondrial of Saccharomyces cerevisiae (strain ATCC 204508 / S288c) (Baker's yeast).